Here is a 324-residue protein sequence, read N- to C-terminus: Putative F-box/kelch-repeat protein At5g28160 (324 aa).

Positions 7 to 54 constitute an F-box domain; sequence RPSFLSLPDEIILSCLARISRSYYPKLSLVCKTFRTLLISNELIVARL. The Kelch repeat unit spans residues 170-216; that stretch reads KIYVMGGCMADESVNWGEVFDIKTQTWEALPDPGPEFRFSSIRKIDV.

This Arabidopsis thaliana (Mouse-ear cress) protein is Putative F-box/kelch-repeat protein At5g28160.